A 407-amino-acid chain; its full sequence is Cytochrome P450-pinF2, plant-inducible (407 aa).

Cys356 serves as a coordination point for heme.

The protein belongs to the cytochrome P450 family. Requires heme as cofactor.

Its function is as follows. Not essential for virulence, but may be involved in the detoxification of plant protective agents at the site of wounding. The polypeptide is Cytochrome P450-pinF2, plant-inducible (cyp104) (Rhizobium radiobacter (Agrobacterium tumefaciens)).